The primary structure comprises 249 residues: 5'-nucleotidase SurE (249 aa).

A divalent metal cation is bound by residues D8, D9, S39, and N91.

Belongs to the SurE nucleotidase family. The cofactor is a divalent metal cation.

The protein resides in the cytoplasm. It carries out the reaction a ribonucleoside 5'-phosphate + H2O = a ribonucleoside + phosphate. In terms of biological role, nucleotidase that shows phosphatase activity on nucleoside 5'-monophosphates. The polypeptide is 5'-nucleotidase SurE (Ectopseudomonas mendocina (strain ymp) (Pseudomonas mendocina)).